Here is a 61-residue protein sequence, read N- to C-terminus: Small ribosomal subunit protein uS14B (61 aa).

Zn(2+) contacts are provided by Cys-24, Cys-27, Cys-40, and Cys-43.

Belongs to the universal ribosomal protein uS14 family. Zinc-binding uS14 subfamily. In terms of assembly, part of the 30S ribosomal subunit. Contacts proteins S3 and S10. The cofactor is Zn(2+).

Functionally, binds 16S rRNA, required for the assembly of 30S particles and may also be responsible for determining the conformation of the 16S rRNA at the A site. This chain is Small ribosomal subunit protein uS14B, found in Oceanobacillus iheyensis (strain DSM 14371 / CIP 107618 / JCM 11309 / KCTC 3954 / HTE831).